The sequence spans 436 residues: uncharacterized protein (436 aa).

The next 12 helical transmembrane spans lie at 38–58 (ILIF…TVGA), 70–90 (VAGI…LLIG), 102–122 (LAGG…AALI), 125–145 (VALL…NLQV), 160–180 (TAAS…PNLV), 197–217 (GPFI…LIFL), 254–274 (IMVG…IMTM), 291–311 (LVIG…GLLV), 319–339 (MAIA…IAPA), 342–362 (LSLL…GLLT), 383–403 (FDVL…MVVA), and 409–429 (ILSI…IWYF).

It belongs to the major facilitator superfamily.

The protein resides in the cell membrane. This is an uncharacterized protein from Bacillus subtilis (strain 168).